Here is a 311-residue protein sequence, read N- to C-terminus: Putative dihydroorotate dehydrogenase A (fumarate) (311 aa).

Substrate is bound by residues K45, 69–73 (NSMGL), and N128. 45-46 (KT) contributes to the FMN binding site. N128 is a binding site for FMN. C131 functions as the Nucleophile in the catalytic mechanism. The FMN site is built by K165 and V193. 194 to 195 (NS) serves as a coordination point for substrate. FMN-binding positions include G220, 248–249 (GG), and 270–271 (GT).

This sequence belongs to the dihydroorotate dehydrogenase family. Type 1 subfamily. Homodimer. FMN serves as cofactor.

The protein resides in the cytoplasm. It carries out the reaction (S)-dihydroorotate + fumarate = orotate + succinate. Its pathway is pyrimidine metabolism; UMP biosynthesis via de novo pathway. Functionally, catalyzes the conversion of dihydroorotate to orotate with fumarate as the electron acceptor. This chain is Putative dihydroorotate dehydrogenase A (fumarate) (pyrD), found in Streptococcus pyogenes serotype M18 (strain MGAS8232).